The chain runs to 423 residues: uncharacterized protein (423 aa).

This is an uncharacterized protein from Pasteurella multocida (strain Pm70).